The primary structure comprises 291 residues: ATP synthase gamma chain (291 aa).

This sequence belongs to the ATPase gamma chain family. In terms of assembly, F-type ATPases have 2 components, CF(1) - the catalytic core - and CF(0) - the membrane proton channel. CF(1) has five subunits: alpha(3), beta(3), gamma(1), delta(1), epsilon(1). CF(0) has three main subunits: a, b and c.

It localises to the cell inner membrane. Its function is as follows. Produces ATP from ADP in the presence of a proton gradient across the membrane. The gamma chain is believed to be important in regulating ATPase activity and the flow of protons through the CF(0) complex. The polypeptide is ATP synthase gamma chain (Sinorhizobium medicae (strain WSM419) (Ensifer medicae)).